The following is a 209-amino-acid chain: Ribosomal RNA large subunit methyltransferase E (209 aa).

Gly-63, Trp-65, Asp-83, Asp-99, and Asp-124 together coordinate S-adenosyl-L-methionine. The Proton acceptor role is filled by Lys-164.

This sequence belongs to the class I-like SAM-binding methyltransferase superfamily. RNA methyltransferase RlmE family.

The protein resides in the cytoplasm. The catalysed reaction is uridine(2552) in 23S rRNA + S-adenosyl-L-methionine = 2'-O-methyluridine(2552) in 23S rRNA + S-adenosyl-L-homocysteine + H(+). Its function is as follows. Specifically methylates the uridine in position 2552 of 23S rRNA at the 2'-O position of the ribose in the fully assembled 50S ribosomal subunit. This Pectobacterium atrosepticum (strain SCRI 1043 / ATCC BAA-672) (Erwinia carotovora subsp. atroseptica) protein is Ribosomal RNA large subunit methyltransferase E.